The following is a 242-amino-acid chain: Ribonuclease 3 (242 aa).

Residues 18 to 146 enclose the RNase III domain; sequence APAIEAKLGY…IIGAIYLDGG (129 aa). Glutamate 59 serves as a coordination point for Mg(2+). Residue aspartate 63 is part of the active site. The Mg(2+) site is built by aspartate 132 and glutamate 135. Glutamate 135 is a catalytic residue. One can recognise a DRBM domain in the interval 172–241; that stretch reads NWKALLQDYC…AADALSRVEL (70 aa). Basic and acidic residues predominate over residues 218–227; the sequence is RGKGTSKKEA. The tract at residues 218–242 is disordered; that stretch reads RGKGTSKKEAQQAAAADALSRVELP.

It belongs to the ribonuclease III family. In terms of assembly, homodimer. Requires Mg(2+) as cofactor.

Its subcellular location is the cytoplasm. It catalyses the reaction Endonucleolytic cleavage to 5'-phosphomonoester.. Digests double-stranded RNA. Involved in the processing of primary rRNA transcript to yield the immediate precursors to the large and small rRNAs (23S and 16S). Processes some mRNAs, and tRNAs when they are encoded in the rRNA operon. Processes pre-crRNA and tracrRNA of type II CRISPR loci if present in the organism. This chain is Ribonuclease 3, found in Protochlamydia amoebophila (strain UWE25).